Reading from the N-terminus, the 562-residue chain is Bacillolysin (562 aa).

An N-terminal signal peptide occupies residues 1–24 (MKKKKQALKVLLSVGILSSSFAFA). Residues 25–245 (HTSSAAPNNV…KQAAKPAAKP (221 aa)) constitute a propeptide, activation peptide. Ca(2+)-binding residues include D303, D305, and D384. H388 serves as a coordination point for Zn(2+). The active site involves E389. Residues H392 and E412 each contribute to the Zn(2+) site. 8 residues coordinate Ca(2+): E423, N429, D431, E433, E436, Y439, T440, and D446. H477 functions as the Proton donor in the catalytic mechanism.

This sequence belongs to the peptidase M4 family. Ca(2+) is required as a cofactor. It depends on Zn(2+) as a cofactor.

The protein localises to the secreted. The enzyme catalyses Similar, but not identical, to that of thermolysin.. Its function is as follows. Extracellular zinc metalloprotease. The protein is Bacillolysin of Priestia megaterium (strain ATCC 14581 / DSM 32 / CCUG 1817 / JCM 2506 / NBRC 15308 / NCIMB 9376 / NCTC 10342 / NRRL B-14308 / VKM B-512 / Ford 19) (Bacillus megaterium).